We begin with the raw amino-acid sequence, 213 residues long: Glutathione S-transferase APIC (213 aa).

A GST N-terminal domain is found at 1–82 (MAIKVHGSPM…YIAHVYADNG (82 aa)). Glutathione contacts are provided by residues serine 11, 12 to 13 (TA), 40 to 41 (HK), 53 to 54 (QV), and 66 to 67 (ES). A GST C-terminal domain is found at 89–213 (DPKKMPIMSV…WVKGLEKLQK (125 aa)).

The protein belongs to the GST superfamily. Phi family.

It catalyses the reaction RX + glutathione = an S-substituted glutathione + a halide anion + H(+). Functionally, conjugation of reduced glutathione to a wide number of exogenous and endogenous hydrophobic electrophiles. The polypeptide is Glutathione S-transferase APIC (Nicotiana tabacum (Common tobacco)).